The following is a 403-amino-acid chain: Coenzyme A biosynthesis bifunctional protein CoaBC (403 aa).

Residues 1-197 are phosphopantothenoylcysteine decarboxylase; that stretch reads MISEIMHPTK…GNNLKKEGNR (197 aa). The interval 198-403 is phosphopantothenate--cysteine ligase; it reads VLILNGGTVE…VEKVKKLVKS (206 aa). The CTP site is built by D285, K294, and F327.

The protein in the N-terminal section; belongs to the HFCD (homo-oligomeric flavin containing Cys decarboxylase) superfamily. This sequence in the C-terminal section; belongs to the PPC synthetase family. Homododecamer. The CoaC domain is responsible for dodecamer formation. Mg(2+) serves as cofactor. Requires FMN as cofactor.

It catalyses the reaction N-[(R)-4-phosphopantothenoyl]-L-cysteine + H(+) = (R)-4'-phosphopantetheine + CO2. The enzyme catalyses (R)-4'-phosphopantothenate + L-cysteine + CTP = N-[(R)-4-phosphopantothenoyl]-L-cysteine + CMP + diphosphate + H(+). The protein operates within cofactor biosynthesis; coenzyme A biosynthesis. Catalyzes two sequential steps in the biosynthesis of coenzyme A. In the first step cysteine is conjugated to 4'-phosphopantothenate to form 4-phosphopantothenoylcysteine. In the second step the latter compound is decarboxylated to form 4'-phosphopantotheine. This Methanocaldococcus jannaschii (strain ATCC 43067 / DSM 2661 / JAL-1 / JCM 10045 / NBRC 100440) (Methanococcus jannaschii) protein is Coenzyme A biosynthesis bifunctional protein CoaBC.